Reading from the N-terminus, the 245-residue chain is Vacuolar iron transporter (245 aa).

Residues 1 to 28 (MGEVGESEKYLLNRHKEHHFTAGETVRD) are Cytoplasmic-facing. A helical transmembrane segment spans residues 29–49 (IIIGFSDGLTVPFALAAGLSG). Residues 50–55 (ANASSS) are Vacuolar-facing. A helical membrane pass occupies residues 56 to 76 (IILTAGIAEVAAGAISMGLGG). The Cytoplasmic segment spans residues 77 to 162 (YLAAKSEADH…PRRALQSALT (86 aa)). Fe cation-binding residues include E94, E97, E105, E108, M141, and E145. A helical transmembrane segment spans residues 163–183 (IAISYVLSGLIPLLPYMFIPI). Residues 184–186 (AQK) are Vacuolar-facing. The chain crosses the membrane as a helical span at residues 187 to 207 (AVVSSVIVTIFALLIFGFAKG). Residues 208 to 214 (YFTGNKP) are Cytoplasmic-facing. The chain crosses the membrane as a helical span at residues 215–235 (VWSALQTALIGAIASAAAFGM). Residues 236–245 (AKGCASSVFE) are Vacuolar-facing.

Belongs to the CCC1 family. As to expression, expressed in petal tissues, but not in other parts of the plant, such as leaves, roots, sepals and stems.

Its subcellular location is the vacuole membrane. The enzyme catalyses Fe(2+)(in) = Fe(2+)(out). Vacuolar iron transporter involved in the transfer of iron ions from the cytosol to the vacuole for intracellular iron storage. Plays an essential role in the development of blue coloration in cornflower petals. This Centaurea cyanus (Garden cornflower) protein is Vacuolar iron transporter.